The sequence spans 243 residues: MNNIFGFFKSSNNTQSASGGKQNQENIKSANPLKISQNWYEERSDKLIVQRNLLIILIILLTIFMVISTLVIAFVVKSKQFDPFVIQLNSNTGRAAVVEPISSSMLTVDESLTRYFIKKYITARETYNPVDFATIARTTVRLFSTSAVYYNYLGYIRNKDFDPTLKYKEDNTTFLVIKSWSKIADDKYIVRFSVNETSGSQLVYNKIAVVSYDYVPMQLTDSELDINPVGFQVNGYRVDDDNS.

A helical transmembrane segment spans residues 55–75 (IILIILLTIFMVISTLVIAFV).

The protein localises to the membrane. This is an uncharacterized protein from Rickettsia prowazekii (strain Madrid E).